Reading from the N-terminus, the 168-residue chain is MPLLDSFKVDHTRMHAPAVRVAKTMTTPKGDTITVFDLRFCIPNKEILPEKGIHTLEHLFAGFMRDHLNGNGVEIIDISPMGCRTGFYMSLIGTPSEQQVADAWLASMQDVGNVKDQSKIPELNEYQCGTYQMHSLAEAQQIAQNVLARKVAVNKNEELTLDEGLLNA.

Fe cation contacts are provided by His54, His58, and Cys128.

The protein belongs to the LuxS family. Homodimer. Fe cation is required as a cofactor.

It catalyses the reaction S-(5-deoxy-D-ribos-5-yl)-L-homocysteine = (S)-4,5-dihydroxypentane-2,3-dione + L-homocysteine. In terms of biological role, involved in the synthesis of autoinducer 2 (AI-2) which is secreted by bacteria and is used to communicate both the cell density and the metabolic potential of the environment. The regulation of gene expression in response to changes in cell density is called quorum sensing. Catalyzes the transformation of S-ribosylhomocysteine (RHC) to homocysteine (HC) and 4,5-dihydroxy-2,3-pentadione (DPD). The chain is S-ribosylhomocysteine lyase from Neisseria meningitidis serogroup C / serotype 2a (strain ATCC 700532 / DSM 15464 / FAM18).